A 147-amino-acid chain; its full sequence is Anti-sigma F factor (147 aa).

It belongs to the anti-sigma-factor family.

It catalyses the reaction L-seryl-[protein] + ATP = O-phospho-L-seryl-[protein] + ADP + H(+). It carries out the reaction L-threonyl-[protein] + ATP = O-phospho-L-threonyl-[protein] + ADP + H(+). Binds to sigma F and blocks its ability to form an RNA polymerase holoenzyme (E-sigma F). Phosphorylates SpoIIAA on a serine residue. This phosphorylation may enable SpoIIAA to act as an anti-anti-sigma factor that counteracts SpoIIAB and thus releases sigma F from inhibition. This is Anti-sigma F factor from Heyndrickxia coagulans (Weizmannia coagulans).